Consider the following 55-residue polypeptide: Locustin (55 aa).

4 disulfide bridges follow: Cys5-Cys40, Cys7-Cys36, Cys10-Cys32, and Cys17-Cys54.

Monomer. As to expression, stored in hemocyte granules and secreted into the hemolymph.

The protein localises to the secreted. Functionally, has antibacterial activity against Gram-positive bacterium M.luteus. This Locusta migratoria (Migratory locust) protein is Locustin.